The primary structure comprises 520 residues: 2,3-bisphosphoglycerate-independent phosphoglycerate mutase (520 aa).

Asp-13 and Ser-63 together coordinate Mn(2+). Ser-63 (phosphoserine intermediate) is an active-site residue. Residues His-124, 154–155, Arg-192, Arg-198, 268–271, and Lys-342 contribute to the substrate site; these read RD and RADR. Positions 409, 413, 450, 451, and 469 each coordinate Mn(2+).

The protein belongs to the BPG-independent phosphoglycerate mutase family. Monomer. Requires Mn(2+) as cofactor.

The enzyme catalyses (2R)-2-phosphoglycerate = (2R)-3-phosphoglycerate. It functions in the pathway carbohydrate degradation; glycolysis; pyruvate from D-glyceraldehyde 3-phosphate: step 3/5. Catalyzes the interconversion of 2-phosphoglycerate and 3-phosphoglycerate. This is 2,3-bisphosphoglycerate-independent phosphoglycerate mutase from Colwellia psychrerythraea (strain 34H / ATCC BAA-681) (Vibrio psychroerythus).